Here is a 102-residue protein sequence, read N- to C-terminus: Gonadotropin subunit beta-1 (102 aa).

Disulfide bonds link C8-C51, C20-C65, C31-C77, C35-C79, and C82-C89. N12 carries an N-linked (GlcNAc...) asparagine glycan.

This sequence belongs to the glycoprotein hormones subunit beta family. In terms of assembly, heterodimer of an alpha and a beta chain.

It is found in the secreted. Its function is as follows. Involved in gametogenesis and steroidogenesis. In Thunnus obesus (Bigeye tuna), this protein is Gonadotropin subunit beta-1 (cgba).